Here is a 257-residue protein sequence, read N- to C-terminus: MIHSKRLKMCLCLIILSVFIGACGMKKEESSKDKQIKENFNKTLSLYPTKNLEDFYDKEGFRDEEFDKGDKGTWIVDSEMVVELKDKKMESRSMVLYINRNTRTTKGNFIVRELWEDSKGYAQSKDTKYPVKMEHNRIIPTKQIADDKLRKEIENFKFFVQYGDFKDINDYKDGDISYNPNVPSYSAEYQLSNNDYNVKQLRKRYNIPTKKAPKLLIKGDGDLKGSSIGHKNLEFTFVENKEENIYFTDSINFKPTE.

A signal peptide spans 1 to 22; that stretch reads MIHSKRLKMCLCLIILSVFIGA. Cys23 is lipidated: N-palmitoyl cysteine. Cys23 carries S-diacylglycerol cysteine lipidation.

It belongs to the staphylococcal tandem lipoprotein family.

The protein resides in the cell membrane. This is an uncharacterized protein from Staphylococcus aureus (strain MRSA252).